A 201-amino-acid chain; its full sequence is Recombination protein RecR (201 aa).

The C4-type zinc-finger motif lies at 60 to 75; the sequence is CRRCGNVDVCDPCTIC. Positions 83 to 178 constitute a Toprim domain; that stretch reads RTLVVVADVG…RVTRLAQGVP (96 aa).

The protein belongs to the RecR family.

Its function is as follows. May play a role in DNA repair. It seems to be involved in an RecBC-independent recombinational process of DNA repair. It may act with RecF and RecO. The chain is Recombination protein RecR from Xanthobacter autotrophicus (strain ATCC BAA-1158 / Py2).